The primary structure comprises 442 residues: NADH-quinone oxidoreductase subunit D (442 aa).

The protein belongs to the complex I 49 kDa subunit family. NDH-1 is composed of 14 different subunits. Subunits NuoB, C, D, E, F, and G constitute the peripheral sector of the complex.

The protein resides in the cell membrane. The catalysed reaction is a quinone + NADH + 5 H(+)(in) = a quinol + NAD(+) + 4 H(+)(out). NDH-1 shuttles electrons from NADH, via FMN and iron-sulfur (Fe-S) centers, to quinones in the respiratory chain. The immediate electron acceptor for the enzyme in this species is believed to be a menaquinone. Couples the redox reaction to proton translocation (for every two electrons transferred, four hydrogen ions are translocated across the cytoplasmic membrane), and thus conserves the redox energy in a proton gradient. The protein is NADH-quinone oxidoreductase subunit D of Mycolicibacterium smegmatis (strain ATCC 700084 / mc(2)155) (Mycobacterium smegmatis).